A 436-amino-acid chain; its full sequence is Adenylyltransferase and sulfurtransferase UBA4 (436 aa).

Residues glycine 74, aspartate 95, 102-106 (SNLHR), lysine 119, and 163-164 (DT) contribute to the ATP site. Zn(2+) is bound by residues cysteine 205 and cysteine 208. The active-site Glycyl thioester intermediate; for adenylyltransferase activity is the cysteine 222. Cysteine 283 and cysteine 286 together coordinate Zn(2+). The region spanning 335 to 434 (NEKDHILIDV…YIDEEDHSYP (100 aa)) is the Rhodanese domain. Residue cysteine 393 is the Cysteine persulfide intermediate; for sulfurtransferase activity of the active site.

The protein in the N-terminal section; belongs to the HesA/MoeB/ThiF family. UBA4 subfamily. The cofactor is Zn(2+).

It is found in the cytoplasm. The protein resides in the cytosol. It functions in the pathway tRNA modification; 5-methoxycarbonylmethyl-2-thiouridine-tRNA biosynthesis. Its function is as follows. Plays a central role in 2-thiolation of mcm(5)S(2)U at tRNA wobble positions of cytosolic tRNA(Lys), tRNA(Glu) and tRNA(Gln). Acts by mediating the C-terminal thiocarboxylation of sulfur carrier URM1. Its N-terminus first activates URM1 as acyl-adenylate (-COAMP), then the persulfide sulfur on the catalytic cysteine is transferred to URM1 to form thiocarboxylation (-COSH) of its C-terminus. The reaction probably involves hydrogen sulfide that is generated from the persulfide intermediate and that acts as a nucleophile towards URM1. Subsequently, a transient disulfide bond is formed. Does not use thiosulfate as sulfur donor; NFS1 probably acting as a sulfur donor for thiocarboxylation reactions. Prior mcm(5) tRNA modification by the elongator complex is required for 2-thiolation. May also be involved in protein urmylation. The protein is Adenylyltransferase and sulfurtransferase UBA4 of Vanderwaltozyma polyspora (strain ATCC 22028 / DSM 70294 / BCRC 21397 / CBS 2163 / NBRC 10782 / NRRL Y-8283 / UCD 57-17) (Kluyveromyces polysporus).